A 249-amino-acid polypeptide reads, in one-letter code: Derlin-2 (249 aa).

The Cytoplasmic segment spans residues 1-21 (MAQAVEEWYRQMPIITRSYLT). The chain crosses the membrane as a helical span at residues 22-42 (AAVVTTVGCTLEIISPYHLYL). Residues 43–96 (NPKLVVQHYEIWRLVTNFLYFRKMDLDFLFHMFFLARYCKLLEENSFRGRTADF) lie on the Lumenal side of the membrane. A helical membrane pass occupies residues 97 to 117 (FYMLLFGATVLTGIVLIGGMI). Residues 118–122 (PYISE) are Cytoplasmic-facing. The chain crosses the membrane as a helical span at residues 123–143 (TFARILFLSNSLTFMMVYVWS). The Lumenal portion of the chain corresponds to 144–152 (KHNPFIHMS). The chain crosses the membrane as a helical span at residues 153 to 173 (FLGLFTFTAAYLPWVLLGFSI). The Cytoplasmic portion of the chain corresponds to 174–249 (LVGSSTWVDL…GAMGADPQAQ (76 aa)).

This sequence belongs to the derlin family.

Its subcellular location is the endoplasmic reticulum membrane. Its function is as follows. May be involved in the degradation process of specific misfolded endoplasmic reticulum (ER) luminal proteins. The protein is Derlin-2 (DER2) of Oryza sativa subsp. japonica (Rice).